Consider the following 157-residue polypeptide: Protein TIFY 8 (157 aa).

In terms of domain architecture, Tify spans 33 to 68 (VPGTTEQLTIFYSGSMVKFDNVPREKIRYACRLRRL). The segment at 126–147 (SIGAQRTGTPPSRRRIHARGKS) is disordered. Residues 137-147 (SRRRIHARGKS) show a composition bias toward basic residues.

The protein belongs to the TIFY/JAZ family. Ubiquitinated. Targeted for degradation by the SCF(COI1) E3 ubiquitin ligase-proteasome pathway during jasmonate signaling.

In terms of biological role, repressor of jasmonate responses. The sequence is that of Protein TIFY 8 from Oryza sativa subsp. japonica (Rice).